We begin with the raw amino-acid sequence, 391 residues long: 1-acyl-sn-glycerol-3-phosphate acyltransferase 2 (391 aa).

A helical membrane pass occupies residues 3–23; it reads MAAAAVIVPLGILFFISGLVV. Positions 92-97 match the HXXXXD motif motif; sequence HRSDID. Transmembrane regions (helical) follow at residues 306-326 and 334-354; these read LAVV…FLHW and KGIA…QILI. Residues 358-391 form a disordered region; the sequence is QSERSTPAKVAPAKPKDKHQSGSSSQTEVEEKQK.

This sequence belongs to the 1-acyl-sn-glycerol-3-phosphate acyltransferase family.

Its subcellular location is the endoplasmic reticulum membrane. It carries out the reaction a 1-acyl-sn-glycero-3-phosphate + an acyl-CoA = a 1,2-diacyl-sn-glycero-3-phosphate + CoA. It functions in the pathway phospholipid metabolism; CDP-diacylglycerol biosynthesis; CDP-diacylglycerol from sn-glycerol 3-phosphate: step 2/3. Converts lysophosphatidic acid (LPA) into phosphatidic acid by incorporating acyl moiety at the 2 position. The sequence is that of 1-acyl-sn-glycerol-3-phosphate acyltransferase 2 (LPAT2) from Brassica oleracea (Wild cabbage).